Reading from the N-terminus, the 205-residue chain is IVSPPVCGNELLENGEECDCGSPANCRNPCCDAASCRLHSWVECESGECCDQCRFVTAGTECRATRSECDLAGQCTGQSADCPIDRFHRNGQPCLQNYGYCYNGKCPIMHHQCYYLFGANATVAQDACFEENKNGIGDFYCRKQSDRLIPCAPEDVKCGRLFCEILPNTRCKHAPGDNGMVDPGTKCEDKKVCFNRKCVDVNTVY.

In terms of domain architecture, Disintegrin spans 4–90; sequence PPVCGNELLE…DCPIDRFHRN (87 aa). Disulfide bonds link cysteine 7–cysteine 26, cysteine 18–cysteine 36, cysteine 62–cysteine 82, cysteine 69–cysteine 94, cysteine 101–cysteine 106, cysteine 113–cysteine 128, cysteine 151–cysteine 158, cysteine 163–cysteine 171, and cysteine 193–cysteine 198. The short motif at 68 to 70 is the D/ECD-tripeptide element; the sequence is ECD. An N-linked (GlcNAc...) asparagine glycan is attached at asparagine 120.

The protein belongs to the venom metalloproteinase (M12B) family. P-III subfamily. P-IIIb sub-subfamily. In terms of assembly, monomer. Expressed by the venom gland.

The protein localises to the secreted. In terms of biological role, inhibits platelet aggregation induced by thrombin and arachidonic acid with IC(50) of 40 and 50 nM respectively (in rabbit platetelet-rich plasma). It also inhibits the adhesion of melanoma tumor cells on fibrinogen and fibronectin, by interfering with the function of alpha-V/beta-3 (ITGAV/ITGB3) and, to a lesser extent, with alpha-V/beta-6 (ITGAV/ITGB6) and alpha-5/beta-1 (ITGA5/ITGB1) integrins. The sequence is that of Disintegrin-like leberagin-C from Macrovipera lebetina transmediterranea (Blunt-nosed viper).